Consider the following 251-residue polypeptide: Ubiquinone/menaquinone biosynthesis C-methyltransferase UbiE (251 aa).

S-adenosyl-L-methionine contacts are provided by residues T74, D95, N123 to A124, and S140.

It belongs to the class I-like SAM-binding methyltransferase superfamily. MenG/UbiE family.

It catalyses the reaction a 2-demethylmenaquinol + S-adenosyl-L-methionine = a menaquinol + S-adenosyl-L-homocysteine + H(+). It carries out the reaction a 2-methoxy-6-(all-trans-polyprenyl)benzene-1,4-diol + S-adenosyl-L-methionine = a 5-methoxy-2-methyl-3-(all-trans-polyprenyl)benzene-1,4-diol + S-adenosyl-L-homocysteine + H(+). Its pathway is quinol/quinone metabolism; menaquinone biosynthesis; menaquinol from 1,4-dihydroxy-2-naphthoate: step 2/2. The protein operates within cofactor biosynthesis; ubiquinone biosynthesis. Its function is as follows. Methyltransferase required for the conversion of demethylmenaquinol (DMKH2) to menaquinol (MKH2) and the conversion of 2-polyprenyl-6-methoxy-1,4-benzoquinol (DDMQH2) to 2-polyprenyl-3-methyl-6-methoxy-1,4-benzoquinol (DMQH2). The protein is Ubiquinone/menaquinone biosynthesis C-methyltransferase UbiE of Citrobacter koseri (strain ATCC BAA-895 / CDC 4225-83 / SGSC4696).